The following is a 102-amino-acid chain: Aspartyl/glutamyl-tRNA(Asn/Gln) amidotransferase subunit C (102 aa).

The protein belongs to the GatC family. As to quaternary structure, heterotrimer of A, B and C subunits.

It carries out the reaction L-glutamyl-tRNA(Gln) + L-glutamine + ATP + H2O = L-glutaminyl-tRNA(Gln) + L-glutamate + ADP + phosphate + H(+). It catalyses the reaction L-aspartyl-tRNA(Asn) + L-glutamine + ATP + H2O = L-asparaginyl-tRNA(Asn) + L-glutamate + ADP + phosphate + 2 H(+). Functionally, allows the formation of correctly charged Asn-tRNA(Asn) or Gln-tRNA(Gln) through the transamidation of misacylated Asp-tRNA(Asn) or Glu-tRNA(Gln) in organisms which lack either or both of asparaginyl-tRNA or glutaminyl-tRNA synthetases. The reaction takes place in the presence of glutamine and ATP through an activated phospho-Asp-tRNA(Asn) or phospho-Glu-tRNA(Gln). The sequence is that of Aspartyl/glutamyl-tRNA(Asn/Gln) amidotransferase subunit C from Leuconostoc citreum (strain KM20).